We begin with the raw amino-acid sequence, 216 residues long: GTP cyclohydrolase 1 (216 aa).

Zn(2+) contacts are provided by C109, H112, and C180.

Belongs to the GTP cyclohydrolase I family. In terms of assembly, toroid-shaped homodecamer, composed of two pentamers of five dimers.

The catalysed reaction is GTP + H2O = 7,8-dihydroneopterin 3'-triphosphate + formate + H(+). It participates in cofactor biosynthesis; 7,8-dihydroneopterin triphosphate biosynthesis; 7,8-dihydroneopterin triphosphate from GTP: step 1/1. The sequence is that of GTP cyclohydrolase 1 from Wigglesworthia glossinidia brevipalpis.